A 233-amino-acid chain; its full sequence is MSIECHNAFILHRRPYRETSQLIDLFCQDVGKVSLVYKGGRSSTRMRRGTAQPFTLLQVSYFGRGSLKTVKSFEAQTQVVPLVGQRLFLAMYINELLYRLLQAETACDGLFECYQQTLLAIAGAVDPQIALRLFELTLIETLGYGVNFSEDIYSGELIESGYEYQYQHQAGFFAKQAIHKQHDVYSGQDILALAQRDFSNQNVLKSAKRFCRQALANLLGGKPLHSRALFTAK.

The protein belongs to the RecO family.

Its function is as follows. Involved in DNA repair and RecF pathway recombination. This Psychromonas ingrahamii (strain DSM 17664 / CCUG 51855 / 37) protein is DNA repair protein RecO.